The following is a 345-amino-acid chain: Protein RecA (345 aa).

65–72 (GPESSGKT) provides a ligand contact to ATP.

This sequence belongs to the RecA family.

The protein localises to the cytoplasm. Can catalyze the hydrolysis of ATP in the presence of single-stranded DNA, the ATP-dependent uptake of single-stranded DNA by duplex DNA, and the ATP-dependent hybridization of homologous single-stranded DNAs. It interacts with LexA causing its activation and leading to its autocatalytic cleavage. The polypeptide is Protein RecA (Colwellia psychrerythraea (strain 34H / ATCC BAA-681) (Vibrio psychroerythus)).